Here is a 388-residue protein sequence, read N- to C-terminus: Succinate--CoA ligase [ADP-forming] subunit beta (388 aa).

The ATP-grasp domain maps to 9-244 (KEILRKYGVT…LDEEDPAEIE (236 aa)). ATP is bound by residues Lys-46, 53 to 55 (GRG), Glu-99, Ala-102, and Glu-107. 2 residues coordinate Mg(2+): Asn-199 and Asp-213. Residues Asn-264 and 321–323 (GIM) each bind substrate.

The protein belongs to the succinate/malate CoA ligase beta subunit family. In terms of assembly, heterotetramer of two alpha and two beta subunits. Mg(2+) is required as a cofactor.

It catalyses the reaction succinate + ATP + CoA = succinyl-CoA + ADP + phosphate. The enzyme catalyses GTP + succinate + CoA = succinyl-CoA + GDP + phosphate. It functions in the pathway carbohydrate metabolism; tricarboxylic acid cycle; succinate from succinyl-CoA (ligase route): step 1/1. Its function is as follows. Succinyl-CoA synthetase functions in the citric acid cycle (TCA), coupling the hydrolysis of succinyl-CoA to the synthesis of either ATP or GTP and thus represents the only step of substrate-level phosphorylation in the TCA. The beta subunit provides nucleotide specificity of the enzyme and binds the substrate succinate, while the binding sites for coenzyme A and phosphate are found in the alpha subunit. The sequence is that of Succinate--CoA ligase [ADP-forming] subunit beta from Janthinobacterium sp. (strain Marseille) (Minibacterium massiliensis).